Reading from the N-terminus, the 476-residue chain is Glycogen synthase (476 aa).

Lys15 contributes to the ADP-alpha-D-glucose binding site.

It belongs to the glycosyltransferase 1 family. Bacterial/plant glycogen synthase subfamily.

It carries out the reaction [(1-&gt;4)-alpha-D-glucosyl](n) + ADP-alpha-D-glucose = [(1-&gt;4)-alpha-D-glucosyl](n+1) + ADP + H(+). It functions in the pathway glycan biosynthesis; glycogen biosynthesis. Functionally, synthesizes alpha-1,4-glucan chains using ADP-glucose. The protein is Glycogen synthase of Bacillus cereus (strain Q1).